The following is a 236-amino-acid chain: 2,3,4,5-tetrahydropyridine-2,6-dicarboxylate N-acetyltransferase (236 aa).

This sequence belongs to the transferase hexapeptide repeat family. DapH subfamily.

The catalysed reaction is (S)-2,3,4,5-tetrahydrodipicolinate + acetyl-CoA + H2O = L-2-acetamido-6-oxoheptanedioate + CoA. The protein operates within amino-acid biosynthesis; L-lysine biosynthesis via DAP pathway; LL-2,6-diaminopimelate from (S)-tetrahydrodipicolinate (acetylase route): step 1/3. Its function is as follows. Catalyzes the transfer of an acetyl group from acetyl-CoA to tetrahydrodipicolinate. This is 2,3,4,5-tetrahydropyridine-2,6-dicarboxylate N-acetyltransferase from Clostridium beijerinckii (strain ATCC 51743 / NCIMB 8052) (Clostridium acetobutylicum).